A 342-amino-acid chain; its full sequence is Holliday junction branch migration complex subunit RuvB (342 aa).

A large ATPase domain (RuvB-L) region spans residues 1–179 (MTNILSPEKS…FGIPMRLNFY (179 aa)). Residues Ile18, Arg19, Gly60, Lys63, Thr64, Thr65, 126–128 (EDF), Arg169, Tyr179, and Arg216 contribute to the ATP site. Residue Thr64 participates in Mg(2+) binding. The small ATPAse domain (RuvB-S) stretch occupies residues 180 to 250 (NTEELKKVLN…VSDFGLNRLE (71 aa)). A head domain (RuvB-H) region spans residues 253–342 (RIGLDSNDYR…HQFNIFNENE (90 aa)). Positions 289, 308, and 313 each coordinate DNA.

It belongs to the RuvB family. In terms of assembly, homohexamer. Forms an RuvA(8)-RuvB(12)-Holliday junction (HJ) complex. HJ DNA is sandwiched between 2 RuvA tetramers; dsDNA enters through RuvA and exits via RuvB. An RuvB hexamer assembles on each DNA strand where it exits the tetramer. Each RuvB hexamer is contacted by two RuvA subunits (via domain III) on 2 adjacent RuvB subunits; this complex drives branch migration. In the full resolvosome a probable DNA-RuvA(4)-RuvB(12)-RuvC(2) complex forms which resolves the HJ.

It is found in the cytoplasm. It catalyses the reaction ATP + H2O = ADP + phosphate + H(+). Functionally, the RuvA-RuvB-RuvC complex processes Holliday junction (HJ) DNA during genetic recombination and DNA repair, while the RuvA-RuvB complex plays an important role in the rescue of blocked DNA replication forks via replication fork reversal (RFR). RuvA specifically binds to HJ cruciform DNA, conferring on it an open structure. The RuvB hexamer acts as an ATP-dependent pump, pulling dsDNA into and through the RuvAB complex. RuvB forms 2 homohexamers on either side of HJ DNA bound by 1 or 2 RuvA tetramers; 4 subunits per hexamer contact DNA at a time. Coordinated motions by a converter formed by DNA-disengaged RuvB subunits stimulates ATP hydrolysis and nucleotide exchange. Immobilization of the converter enables RuvB to convert the ATP-contained energy into a lever motion, pulling 2 nucleotides of DNA out of the RuvA tetramer per ATP hydrolyzed, thus driving DNA branch migration. The RuvB motors rotate together with the DNA substrate, which together with the progressing nucleotide cycle form the mechanistic basis for DNA recombination by continuous HJ branch migration. Branch migration allows RuvC to scan DNA until it finds its consensus sequence, where it cleaves and resolves cruciform DNA. This chain is Holliday junction branch migration complex subunit RuvB, found in Rickettsia rickettsii (strain Sheila Smith).